The chain runs to 211 residues: MNEGVHGEIHVADPSICRVSEASKETAVESVSRSVGATGDTAAVEFTAPSSAAIDDADEIFHHEQKTIYRVTHSFTEESRCACELIEGHGCPVRHLEADCGAVVLSFVAADLESFRDIVVNLKSAFDGVSLRRLTQSEPDSATGSLVFVDRDELTARQREVLETAHEMGYFEHPREANATEVAAALDINRSTFTEHLSAAQSKLLDTILDV.

The HTH bat-type domain occupies 154 to 205 (LTARQREVLETAHEMGYFEHPREANATEVAAALDINRSTFTEHLSAAQSKLL).

In terms of biological role, activates transcription of the denitrifying genes (nitrate reductase narA and nitrite reductase nirK) under anaerobic conditions. In Haloferax volcanii (strain ATCC 29605 / DSM 3757 / JCM 8879 / NBRC 14742 / NCIMB 2012 / VKM B-1768 / DS2) (Halobacterium volcanii), this protein is Transcriptional regulator NarO.